The sequence spans 150 residues: Large ribosomal subunit protein bL9 (150 aa).

It belongs to the bacterial ribosomal protein bL9 family.

In terms of biological role, binds to the 23S rRNA. This Burkholderia ambifaria (strain MC40-6) protein is Large ribosomal subunit protein bL9.